The chain runs to 784 residues: Lon protease (784 aa).

Positions 6–207 constitute a Lon N-terminal domain; the sequence is LPLMALRDMV…TVITTLTSNI (202 aa). 356 to 363 serves as a coordination point for ATP; it reads GPPGVGKT. The Lon proteolytic domain occupies 592 to 773; the sequence is EDQIGSTTGL…DQVLKHALVE (182 aa). Residues Ser-679 and Lys-722 contribute to the active site.

It belongs to the peptidase S16 family. As to quaternary structure, homohexamer. Organized in a ring with a central cavity.

The protein resides in the cytoplasm. It catalyses the reaction Hydrolysis of proteins in presence of ATP.. ATP-dependent serine protease that mediates the selective degradation of mutant and abnormal proteins as well as certain short-lived regulatory proteins. Required for cellular homeostasis and for survival from DNA damage and developmental changes induced by stress. Degrades polypeptides processively to yield small peptide fragments that are 5 to 10 amino acids long. Binds to DNA in a double-stranded, site-specific manner. This is Lon protease from Rickettsia typhi (strain ATCC VR-144 / Wilmington).